A 371-amino-acid polypeptide reads, in one-letter code: Cuticle collagen 71 (371 aa).

The helical transmembrane segment at Gly-38–Phe-60 threads the bilayer. Disordered regions lie at residues Ala-108–Ala-127 and Glu-153–Arg-371. Positions Pro-174–Pro-186 are enriched in pro residues. Positions Pro-188–Pro-201 are enriched in low complexity. A compositionally biased stretch (pro residues) spans Gly-202–Ala-222. A compositionally biased stretch (low complexity) spans Gly-223 to Pro-240. A Collagen-like domain is found at Gly-223–Ala-280. Basic and acidic residues predominate over residues Asn-246–Arg-260. The segment covering Ala-314–Asn-323 has biased composition (low complexity). The span at His-340 to Glu-349 shows a compositional bias: basic and acidic residues.

This sequence belongs to the cuticular collagen family. In terms of assembly, collagen polypeptide chains are complexed within the cuticle by disulfide bonds and other types of covalent cross-links.

It is found in the membrane. It localises to the nucleus. Its function is as follows. Probable cuticular collagen-like protein. Nematode cuticles are composed largely of collagen-like proteins. The cuticle functions both as an exoskeleton and as a barrier to protect the worm from its environment. Acts downstream of the Wnt signaling pathway, perhaps in the formation of the adult cuticle. This Caenorhabditis elegans protein is Cuticle collagen 71.